Here is a 66-residue protein sequence, read N- to C-terminus: Large ribosomal subunit protein bL35 (66 aa).

Basic residues-rich tracts occupy residues methionine 1 to lysine 15 and alanine 27 to glutamine 40. A disordered region spans residues methionine 1–glutamine 40.

This sequence belongs to the bacterial ribosomal protein bL35 family.

The chain is Large ribosomal subunit protein bL35 from Rhodopseudomonas palustris (strain BisA53).